Consider the following 486-residue polypeptide: Probable glycine dehydrogenase (decarboxylating) subunit 2 (486 aa).

Residues 1 to 26 are disordered; the sequence is MLIFESSRPGRQARAQAPKPTAATND. Position 264 is an N6-(pyridoxal phosphate)lysine (K264).

Belongs to the GcvP family. C-terminal subunit subfamily. The glycine cleavage system is composed of four proteins: P, T, L and H. In this organism, the P 'protein' is a heterodimer of two subunits. It depends on pyridoxal 5'-phosphate as a cofactor.

The enzyme catalyses N(6)-[(R)-lipoyl]-L-lysyl-[glycine-cleavage complex H protein] + glycine + H(+) = N(6)-[(R)-S(8)-aminomethyldihydrolipoyl]-L-lysyl-[glycine-cleavage complex H protein] + CO2. The glycine cleavage system catalyzes the degradation of glycine. The P protein binds the alpha-amino group of glycine through its pyridoxal phosphate cofactor; CO(2) is released and the remaining methylamine moiety is then transferred to the lipoamide cofactor of the H protein. In Nitrosococcus oceani (strain ATCC 19707 / BCRC 17464 / JCM 30415 / NCIMB 11848 / C-107), this protein is Probable glycine dehydrogenase (decarboxylating) subunit 2.